The primary structure comprises 519 residues: Berghepain-1 (519 aa).

Topologically, residues M1–T32 are cytoplasmic. Residues I33–F53 traverse the membrane as a helical; Signal-anchor for type II membrane protein segment. Residues K54 to L519 are Lumenal-facing. N-linked (GlcNAc...) asparagine glycosylation is found at N55 and N143. Disulfide bonds link C298–C340, C333–C373, C358–C378, and C427–C508. C301 is an active-site residue. A glycan (N-linked (GlcNAc...) asparagine) is linked at N432. Active-site residues include H433 and N483.

The protein belongs to the peptidase C1 family.

It is found in the membrane. In terms of biological role, cysteine protease. Required for host hepatocyte-derived merozoite infectivity and to a lesser extent for host erythrocyte-derived merozoite infectivity. The protein is Berghepain-1 of Plasmodium berghei (strain Anka).